A 429-amino-acid polypeptide reads, in one-letter code: Histidine--tRNA ligase (429 aa).

This sequence belongs to the class-II aminoacyl-tRNA synthetase family. In terms of assembly, homodimer.

Its subcellular location is the cytoplasm. The enzyme catalyses tRNA(His) + L-histidine + ATP = L-histidyl-tRNA(His) + AMP + diphosphate + H(+). The polypeptide is Histidine--tRNA ligase (Alkalilimnicola ehrlichii (strain ATCC BAA-1101 / DSM 17681 / MLHE-1)).